The sequence spans 488 residues: 3-octaprenyl-4-hydroxybenzoate carboxy-lyase (488 aa).

Position 172 (Asn-172) interacts with Mn(2+). Residues 175–177, 189–191, and 194–195 contribute to the prenylated FMN site; these read IYR, RWL, and RG. Residue Glu-238 coordinates Mn(2+). The active-site Proton donor is the Asp-287.

It belongs to the UbiD family. Homohexamer. Prenylated FMN serves as cofactor. Mn(2+) is required as a cofactor.

The protein resides in the cell membrane. The catalysed reaction is a 4-hydroxy-3-(all-trans-polyprenyl)benzoate + H(+) = a 2-(all-trans-polyprenyl)phenol + CO2. Its pathway is cofactor biosynthesis; ubiquinone biosynthesis. In terms of biological role, catalyzes the decarboxylation of 3-octaprenyl-4-hydroxy benzoate to 2-octaprenylphenol, an intermediate step in ubiquinone biosynthesis. This is 3-octaprenyl-4-hydroxybenzoate carboxy-lyase from Legionella pneumophila (strain Corby).